Reading from the N-terminus, the 159-residue chain is Ribosome maturation factor RimP (159 aa).

It belongs to the RimP family.

It localises to the cytoplasm. Functionally, required for maturation of 30S ribosomal subunits. This chain is Ribosome maturation factor RimP, found in Trichlorobacter lovleyi (strain ATCC BAA-1151 / DSM 17278 / SZ) (Geobacter lovleyi).